The chain runs to 329 residues: NADH-quinone oxidoreductase subunit H (329 aa).

9 helical membrane-spanning segments follow: residues 9 to 29, 42 to 62, 75 to 95, 117 to 137, 154 to 174, 188 to 208, 238 to 258, 269 to 291, and 309 to 329; these read LIKI…ATYI, GPCY…IKLF, FIFT…MAPI, IGFL…ILAG, IQLL…LMVV, GGFL…FLIA, LKWG…SFVI, WGFI…LSMW, and WKIM…IILI.

It belongs to the complex I subunit 1 family. In terms of assembly, NDH-1 is composed of 14 different subunits. Subunits NuoA, H, J, K, L, M, N constitute the membrane sector of the complex.

It is found in the cell inner membrane. It carries out the reaction a quinone + NADH + 5 H(+)(in) = a quinol + NAD(+) + 4 H(+)(out). NDH-1 shuttles electrons from NADH, via FMN and iron-sulfur (Fe-S) centers, to quinones in the respiratory chain. The immediate electron acceptor for the enzyme in this species is believed to be ubiquinone. Couples the redox reaction to proton translocation (for every two electrons transferred, four hydrogen ions are translocated across the cytoplasmic membrane), and thus conserves the redox energy in a proton gradient. This subunit may bind ubiquinone. The sequence is that of NADH-quinone oxidoreductase subunit H from Helicobacter pylori (strain Shi470).